The sequence spans 124 residues: Ribosome-binding factor A (124 aa).

This sequence belongs to the RbfA family. Monomer. Binds 30S ribosomal subunits, but not 50S ribosomal subunits or 70S ribosomes.

The protein localises to the cytoplasm. Its function is as follows. One of several proteins that assist in the late maturation steps of the functional core of the 30S ribosomal subunit. Associates with free 30S ribosomal subunits (but not with 30S subunits that are part of 70S ribosomes or polysomes). Required for efficient processing of 16S rRNA. May interact with the 5'-terminal helix region of 16S rRNA. This Thiobacillus denitrificans (strain ATCC 25259 / T1) protein is Ribosome-binding factor A.